We begin with the raw amino-acid sequence, 301 residues long: Peroxisome assembly protein 26 (301 aa).

Over 1 to 246 (MKNDSSTSAA…DAAASHLLSQ (246 aa)) the chain is Cytoplasmic. Residues 247-263 (PFKKSLLAALILCLLVL) traverse the membrane as a helical; Signal-anchor for type II membrane protein segment. Residues 264–301 (RFDPATPSSLPFLYQLAHLFRRIQKATLSRLYPLALRD) are Peroxisomal-facing.

This sequence belongs to the peroxin-26 family. In terms of assembly, interacts directly with PEX6 via its cytoplasmic domain. Interacts indirectly with PEX1, via its interaction with PEX6.

Its subcellular location is the peroxisome membrane. Functionally, peroxisomal docking factor that anchors PEX1 and PEX6 to peroxisome membranes. It is therefore required for the formation of the PEX1-PEX6 AAA ATPase complex, a complex that mediates the extraction of the PEX5 receptor from peroxisomal membrane. The sequence is that of Peroxisome assembly protein 26 (Pex26) from Cricetulus griseus (Chinese hamster).